Consider the following 203-residue polypeptide: Ras-like protein family member 10A (203 aa).

A small GTPase-like region spans residues 1-203 (MGGSLRVAVL…ALHPARCSLM (203 aa)). A GTP-binding site is contributed by 11-18 (GAPGVGKT). The Effector region signature appears at 33–42 (HRPTDGPRLY). GTP contacts are provided by residues 59-62 (DGDV) and 129-132 (NKRD). Position 200 is a cysteine methyl ester (Cys-200). Residue Cys-200 is the site of S-farnesyl cysteine attachment. The propeptide at 201–203 (SLM) is removed in mature form.

This sequence belongs to the small GTPase superfamily. Ras family. Post-translationally, isoprenylation is essential for nucleolar localization, and the proliferation-inhibiting activity of RASL10A. Expression appears to be strictly limited to the central nervous system.

The protein resides in the cell membrane. It localises to the nucleus. It is found in the nucleolus. It carries out the reaction GTP + H2O = GDP + phosphate + H(+). In terms of biological role, potent inhibitor of cellular proliferation. The sequence is that of Ras-like protein family member 10A (RASL10A) from Homo sapiens (Human).